The sequence spans 596 residues: CRISPR-associated DNA-binding protein Cas12m (596 aa).

The segment at 19–53 (EVLRQQLWLAHNLREDLVSLQLAYDDDLKAIWSSY) is recognition domain (REC1-N). Residues 54 to 121 (PDVAQAEDTM…RDAIAVVKDD (68 aa)) are recognition domain (REC2). Coiled coils occupy residues 55–83 (DVAQAEDTMAAAEADAVALSERVKQARIE) and 91–117 (TELTQQLRDAKKRLKDARQARRDAIAV). The tract at residues 122–190 (AAERRKARSD…LRHHRFDGSG (69 aa)) is recognition domain (REC1-C). A wedge domain (WED) region spans residues 191-302 (TIAVQLQRQA…RAKLCVTARI (112 aa)). Residues 303 to 313 (GDTEPVTSGPT) form a linker region. The interval 314-541 (VALHLGWRST…RDGVPVTIVA (228 aa)) is ruvC-I. H317 contributes to the Mg(2+) binding site. The interval 541–577 (AAADFTRTHSRCGHVNPADDRYLSNPVRCDGCGAMYD) is target nucleic-acid binding (TNB). Zn(2+) contacts are provided by H549, C552, C569, and C572. Positions 578–596 (QDRSFVTLMLRAATAPSNP) are ruvC-II. D579 provides a ligand contact to Mg(2+).

The protein belongs to the CRISPR-associated DNA-binding protein Cas12m family. As to quaternary structure, binds crRNA and target dsDNA as a monomer. Mg(2+) is required as a cofactor. Requires Zn(2+) as cofactor.

Functionally, CRISPR (clustered regularly interspaced short palindromic repeat), is an adaptive immune system that provides protection against mobile genetic elements (viruses, transposable elements and conjugative plasmids). CRISPR clusters contain sequences complementary to antecedent mobile elements and target invading nucleic acids. CRISPR clusters are transcribed and processed into CRISPR RNA (crRNA). Recognizes a short motif in the CRISPR repeat sequences (the 5' PAM or protospacer adjacent motif, 5'-TTN-3' in this organism) to help distinguish self versus nonself, as targets within the bacterial CRISPR locus do not have PAMs. Upon expression in E.coli as a CRISPR locus inhibits plasmid propagation when targeted to regions essential for plasmid propagation (replication origin and dnaA). The crRNA-Cas12m complex inhibits transcription from target DNA leading to gene silencing. Cas12m-crRNA binds DNA in a PAM-dependent, crRNA-guided fashion. Binds a 17-bp crRNA-ss-target DNA heteroduplex, in a 56 nucleotide crRNA. No dsDNA, ssDNA or RNA nuclease activity is seen for the crRNA-Cas12m complex. Is required to process pre-crRNA to mature crRNA without a tracrRNA. Upon expression in E.coli as a CRISPR region preferentially binds to its associated crRNA. The polypeptide is CRISPR-associated DNA-binding protein Cas12m (Mycolicibacterium mucogenicum (Mycobacterium mucogenicum)).